Consider the following 397-residue polypeptide: CCA-adding enzyme (397 aa).

ATP contacts are provided by glycine 27 and arginine 30. Residues glycine 27 and arginine 30 each contribute to the CTP site. Aspartate 40 and aspartate 42 together coordinate Mg(2+). ATP contacts are provided by arginine 111, aspartate 154, arginine 157, arginine 160, and arginine 163. CTP is bound by residues arginine 111, aspartate 154, arginine 157, arginine 160, and arginine 163.

The protein belongs to the tRNA nucleotidyltransferase/poly(A) polymerase family. Bacterial CCA-adding enzyme type 3 subfamily. As to quaternary structure, homodimer. Requires Mg(2+) as cofactor.

The catalysed reaction is a tRNA precursor + 2 CTP + ATP = a tRNA with a 3' CCA end + 3 diphosphate. The enzyme catalyses a tRNA with a 3' CCA end + 2 CTP + ATP = a tRNA with a 3' CCACCA end + 3 diphosphate. Functionally, catalyzes the addition and repair of the essential 3'-terminal CCA sequence in tRNAs without using a nucleic acid template. Adds these three nucleotides in the order of C, C, and A to the tRNA nucleotide-73, using CTP and ATP as substrates and producing inorganic pyrophosphate. Has no poly(A) polymerase activity. The protein is CCA-adding enzyme of Bacillus subtilis (strain 168).